Consider the following 237-residue polypeptide: MTNTTSPAILNPIARPEVPQELAENIILTSLNDVYDWARLSSLWPLMYGTACCFIEFAAMIGSRFDFDRFGLVPRNSPRQADLIITSGTITMKMAPALVRLYEQMPSPKYVIAMGACTITGGMFSSDSYSAVRGVDKLIPVDVYLPGCPPRPEAIMDAIVKLRKKIANEHINERGNLAQTHRLFTAKHKMKPVPPILTGQYLNAPSRQAPPPALAAAMGIAVPALGEAVSETTSVAE.

Cysteine 52, cysteine 53, cysteine 117, and cysteine 148 together coordinate [4Fe-4S] cluster.

The protein belongs to the complex I 20 kDa subunit family. As to quaternary structure, NDH-1 can be composed of about 15 different subunits; different subcomplexes with different compositions have been identified which probably have different functions. Requires [4Fe-4S] cluster as cofactor.

The protein localises to the cellular thylakoid membrane. The enzyme catalyses a plastoquinone + NADH + (n+1) H(+)(in) = a plastoquinol + NAD(+) + n H(+)(out). It carries out the reaction a plastoquinone + NADPH + (n+1) H(+)(in) = a plastoquinol + NADP(+) + n H(+)(out). In terms of biological role, NDH-1 shuttles electrons from an unknown electron donor, via FMN and iron-sulfur (Fe-S) centers, to quinones in the respiratory and/or the photosynthetic chain. The immediate electron acceptor for the enzyme in this species is believed to be plastoquinone. Couples the redox reaction to proton translocation, and thus conserves the redox energy in a proton gradient. Cyanobacterial NDH-1 also plays a role in inorganic carbon-concentration. The protein is NAD(P)H-quinone oxidoreductase subunit K of Thermosynechococcus vestitus (strain NIES-2133 / IAM M-273 / BP-1).